Reading from the N-terminus, the 289-residue chain is uncharacterized protein (289 aa).

Transmembrane regions (helical) follow at residues 13-32 (INFA…LSGS), 37-59 (LIIS…HLND), 80-99 (IVTE…IFFI), 104-121 (EIAL…WLYS), 141-160 (VFTY…TIFS), 165-183 (VGVV…GFFL), 203-225 (VLSP…FVVI), 235-252 (TSSL…FAIY), and 265-287 (IISS…AIGC).

The protein resides in the cell membrane. This is an uncharacterized protein from Archaeoglobus fulgidus (strain ATCC 49558 / DSM 4304 / JCM 9628 / NBRC 100126 / VC-16).